The sequence spans 64 residues: uncharacterized protein (64 aa).

The helical transmembrane segment at 33-55 (YTPLGSYMIFGIVHYFCSYHIGI) threads the bilayer.

The protein localises to the membrane. This is an uncharacterized protein from Saccharomyces cerevisiae (strain ATCC 204508 / S288c) (Baker's yeast).